We begin with the raw amino-acid sequence, 376 residues long: Integrator complex assembly factor WDR73 (376 aa).

WD repeat units follow at residues F84 to I123, A276 to S316, and T337 to R376. Residues S316 to S336 form a disordered region.

This sequence belongs to the WD repeat WDR73 family.

Its subcellular location is the cytoplasm. The protein resides in the cytoskeleton. The protein localises to the spindle. It localises to the spindle pole. It is found in the cleavage furrow. Component of a multiprotein complex required for the assembly of the RNA endonuclease module of the integrator complex. Associates with ints9 and ints11 in the cytoplasm, stabilizing the ints9-ints11 heterodimer and blocking the active site of ints11. Brat1 then joins the complex and plugs the active site of ints11, leading to wdr73 release and nuclear import of ints9 and ints11. The sequence is that of Integrator complex assembly factor WDR73 (wdr73) from Danio rerio (Zebrafish).